A 240-amino-acid polypeptide reads, in one-letter code: Ribose-5-phosphate isomerase A (240 aa).

Substrate contacts are provided by residues 41 to 44 (TGST), 94 to 97 (DGAD), and 107 to 110 (KGGG). E116 acts as the Proton acceptor in catalysis. K134 is a substrate binding site.

Belongs to the ribose 5-phosphate isomerase family. Homodimer.

The catalysed reaction is aldehydo-D-ribose 5-phosphate = D-ribulose 5-phosphate. It participates in carbohydrate degradation; pentose phosphate pathway; D-ribose 5-phosphate from D-ribulose 5-phosphate (non-oxidative stage): step 1/1. Catalyzes the reversible conversion of ribose-5-phosphate to ribulose 5-phosphate. The sequence is that of Ribose-5-phosphate isomerase A from Polaromonas sp. (strain JS666 / ATCC BAA-500).